The chain runs to 238 residues: ATP synthase subunit a (238 aa).

The next 6 helical transmembrane spans lie at 18–38, 76–96, 114–134, 150–170, 188–208, and 211–231; these read TTNLISGLVSALIVFCVVFAL, FGLYAFTLFLFIFVSNQIGLF, PIVTLTLSLITMMLAHYSGVA, FKVWLPIGVFTEFIDFLTLGL, GIAFSGGIVNMIVAIPLALIW, and FSVFLGSIQAFVFVTLTSVYI.

The protein belongs to the ATPase A chain family. As to quaternary structure, F-type ATPases have 2 components, CF(1) - the catalytic core - and CF(0) - the membrane proton channel. CF(1) has five subunits: alpha(3), beta(3), gamma(1), delta(1), epsilon(1). CF(0) has three main subunits: a(1), b(2) and c(9-12). The alpha and beta chains form an alternating ring which encloses part of the gamma chain. CF(1) is attached to CF(0) by a central stalk formed by the gamma and epsilon chains, while a peripheral stalk is formed by the delta and b chains.

The protein localises to the cell membrane. In terms of biological role, key component of the proton channel; it plays a direct role in the translocation of protons across the membrane. This Pediococcus pentosaceus (strain ATCC 25745 / CCUG 21536 / LMG 10740 / 183-1w) protein is ATP synthase subunit a.